A 234-amino-acid chain; its full sequence is Small ribosomal subunit protein uS3 (234 aa).

One can recognise a KH type-2 domain in the interval 39 to 107 (IRKMLKERLK…EVHLNLVEVR (69 aa)). Positions 215-227 (QERRLQESGEQRA) are enriched in basic and acidic residues. The segment at 215–234 (QERRLQESGEQRARSGRQAA) is disordered.

This sequence belongs to the universal ribosomal protein uS3 family. As to quaternary structure, part of the 30S ribosomal subunit. Forms a tight complex with proteins S10 and S14.

Functionally, binds the lower part of the 30S subunit head. Binds mRNA in the 70S ribosome, positioning it for translation. The protein is Small ribosomal subunit protein uS3 of Maricaulis maris (strain MCS10) (Caulobacter maris).